Here is a 454-residue protein sequence, read N- to C-terminus: Bifunctional protein GlmU (454 aa).

The interval 1 to 232 (MTDRTCLSIV…VDNVIGINNR (232 aa)) is pyrophosphorylase. UDP-N-acetyl-alpha-D-glucosamine contacts are provided by residues 11-14 (LAAG), K25, Q78, and 83-84 (GT). Residue D108 participates in Mg(2+) binding. Residues G144, E158, N173, and N230 each contribute to the UDP-N-acetyl-alpha-D-glucosamine site. Position 230 (N230) interacts with Mg(2+). The interval 233–253 (AELAEAETIWQNRKRRELMLS) is linker. Residues 254 to 454 (GVTLIAPETV…AIKAAKSVSK (201 aa)) are N-acetyltransferase. UDP-N-acetyl-alpha-D-glucosamine is bound by residues R319 and K337. The active-site Proton acceptor is H349. UDP-N-acetyl-alpha-D-glucosamine contacts are provided by Y352 and N363. Residues A366, 372-373 (NY), S391, S409, and R426 contribute to the acetyl-CoA site.

In the N-terminal section; belongs to the N-acetylglucosamine-1-phosphate uridyltransferase family. This sequence in the C-terminal section; belongs to the transferase hexapeptide repeat family. Homotrimer. It depends on Mg(2+) as a cofactor.

It is found in the cytoplasm. It carries out the reaction alpha-D-glucosamine 1-phosphate + acetyl-CoA = N-acetyl-alpha-D-glucosamine 1-phosphate + CoA + H(+). It catalyses the reaction N-acetyl-alpha-D-glucosamine 1-phosphate + UTP + H(+) = UDP-N-acetyl-alpha-D-glucosamine + diphosphate. The protein operates within nucleotide-sugar biosynthesis; UDP-N-acetyl-alpha-D-glucosamine biosynthesis; N-acetyl-alpha-D-glucosamine 1-phosphate from alpha-D-glucosamine 6-phosphate (route II): step 2/2. Its pathway is nucleotide-sugar biosynthesis; UDP-N-acetyl-alpha-D-glucosamine biosynthesis; UDP-N-acetyl-alpha-D-glucosamine from N-acetyl-alpha-D-glucosamine 1-phosphate: step 1/1. It functions in the pathway bacterial outer membrane biogenesis; LPS lipid A biosynthesis. Its function is as follows. Catalyzes the last two sequential reactions in the de novo biosynthetic pathway for UDP-N-acetylglucosamine (UDP-GlcNAc). The C-terminal domain catalyzes the transfer of acetyl group from acetyl coenzyme A to glucosamine-1-phosphate (GlcN-1-P) to produce N-acetylglucosamine-1-phosphate (GlcNAc-1-P), which is converted into UDP-GlcNAc by the transfer of uridine 5-monophosphate (from uridine 5-triphosphate), a reaction catalyzed by the N-terminal domain. In Brucella abortus (strain S19), this protein is Bifunctional protein GlmU.